The sequence spans 396 residues: S-adenosylmethionine synthase (396 aa).

Histidine 16 provides a ligand contact to ATP. Aspartate 18 lines the Mg(2+) pocket. Glutamate 44 contributes to the K(+) binding site. The L-methionine site is built by glutamate 57 and glutamine 100. A flexible loop region spans residues glutamine 100–arginine 110. Residues aspartate 167 to lysine 169, arginine 233 to phenylalanine 234, aspartate 242, arginine 248 to lysine 249, alanine 265, and lysine 269 each bind ATP. Aspartate 242 lines the L-methionine pocket. An L-methionine-binding site is contributed by lysine 273.

This sequence belongs to the AdoMet synthase family. As to quaternary structure, homotetramer; dimer of dimers. It depends on Mg(2+) as a cofactor. K(+) is required as a cofactor.

The protein resides in the cytoplasm. The enzyme catalyses L-methionine + ATP + H2O = S-adenosyl-L-methionine + phosphate + diphosphate. It participates in amino-acid biosynthesis; S-adenosyl-L-methionine biosynthesis; S-adenosyl-L-methionine from L-methionine: step 1/1. Its function is as follows. Catalyzes the formation of S-adenosylmethionine (AdoMet) from methionine and ATP. The overall synthetic reaction is composed of two sequential steps, AdoMet formation and the subsequent tripolyphosphate hydrolysis which occurs prior to release of AdoMet from the enzyme. This is S-adenosylmethionine synthase from Paraburkholderia phytofirmans (strain DSM 17436 / LMG 22146 / PsJN) (Burkholderia phytofirmans).